The primary structure comprises 273 residues: Mitochondrial distribution and morphology protein 12 (273 aa).

The region spanning 1–273 (MSIDFDWSKL…LVWPSYITIE (273 aa)) is the SMP-LTD domain. Residues 124–145 (LTSPIPESRPSTPMDNHQERDR) are disordered.

Belongs to the MDM12 family. In terms of assembly, component of the ER-mitochondria encounter structure (ERMES) or MDM complex, composed of mmm1, mdm10, mdm12 and mdm34. A mmm1 homodimer associates with one molecule of mdm12 on each side in a pairwise head-to-tail manner, and the SMP-LTD domains of mmm1 and mdm12 generate a continuous hydrophobic tunnel for phospholipid trafficking.

It is found in the mitochondrion outer membrane. The protein localises to the endoplasmic reticulum membrane. Functionally, component of the ERMES/MDM complex, which serves as a molecular tether to connect the endoplasmic reticulum (ER) and mitochondria. Components of this complex are involved in the control of mitochondrial shape and protein biogenesis, and function in nonvesicular lipid trafficking between the ER and mitochondria. Mdm12 is required for the interaction of the ER-resident membrane protein mmm1 and the outer mitochondrial membrane-resident beta-barrel protein mdm10. The mdm12-mmm1 subcomplex functions in the major beta-barrel assembly pathway that is responsible for biogenesis of all mitochondrial outer membrane beta-barrel proteins, and acts in a late step after the SAM complex. The mdm10-mdm12-mmm1 subcomplex further acts in the TOM40-specific pathway after the action of the mdm12-mmm1 complex. Essential for establishing and maintaining the structure of mitochondria and maintenance of mtDNA nucleoids. In Schizosaccharomyces pombe (strain 972 / ATCC 24843) (Fission yeast), this protein is Mitochondrial distribution and morphology protein 12.